The primary structure comprises 325 residues: Thiamine-monophosphate kinase (325 aa).

Positions 30, 45, 46, and 47 each coordinate Mg(2+). His54 is a binding site for substrate. The Mg(2+) site is built by Asp75 and Asp122. ATP is bound by residues 121–122 (GD) and Arg146. A Mg(2+)-binding site is contributed by Asp212. Position 214 (Ser214) interacts with ATP. Residue Asp215 coordinates Mg(2+). Positions 263 and 319 each coordinate substrate.

This sequence belongs to the thiamine-monophosphate kinase family.

The enzyme catalyses thiamine phosphate + ATP = thiamine diphosphate + ADP. It functions in the pathway cofactor biosynthesis; thiamine diphosphate biosynthesis; thiamine diphosphate from thiamine phosphate: step 1/1. Is markedly activated by the monovalent cations K(+), NH(4)(+), and Rb(+). Is significantly inhibited by ADP, AMP, p-chloromercuribenzoate, N-ethylmaleimide, pyrophosphate, and EDTA. Catalyzes the ATP-dependent phosphorylation of thiamine-monophosphate (TMP) to form thiamine-pyrophosphate (TPP), the active form of vitamin B1. Cannot use thiamine as substrate. Is highly specific for ATP as phosphate donor. The polypeptide is Thiamine-monophosphate kinase (thiL) (Escherichia coli (strain K12)).